We begin with the raw amino-acid sequence, 439 residues long: uncharacterized protein (439 aa).

Residues 116 to 439 (GKAASYRAAQ…PMRTPLQEAE (324 aa)) enclose the YcaO domain.

This is an uncharacterized protein from Mycobacterium tuberculosis (strain CDC 1551 / Oshkosh).